Consider the following 308-residue polypeptide: Pantothenate kinase (308 aa).

93 to 100 is an ATP binding site; it reads GSVAVGKS.

The protein belongs to the prokaryotic pantothenate kinase family.

It localises to the cytoplasm. The catalysed reaction is (R)-pantothenate + ATP = (R)-4'-phosphopantothenate + ADP + H(+). The protein operates within cofactor biosynthesis; coenzyme A biosynthesis; CoA from (R)-pantothenate: step 1/5. The protein is Pantothenate kinase of Corynebacterium diphtheriae (strain ATCC 700971 / NCTC 13129 / Biotype gravis).